The primary structure comprises 356 residues: tRNA N6-adenosine threonylcarbamoyltransferase (356 aa).

2 residues coordinate Fe cation: H116 and H120. Substrate is bound by residues 139–143 (IVSGG), D174, G187, D191, and N281. Residue D309 coordinates Fe cation.

The protein belongs to the KAE1 / TsaD family. Requires Fe(2+) as cofactor.

Its subcellular location is the cytoplasm. It catalyses the reaction L-threonylcarbamoyladenylate + adenosine(37) in tRNA = N(6)-L-threonylcarbamoyladenosine(37) in tRNA + AMP + H(+). In terms of biological role, required for the formation of a threonylcarbamoyl group on adenosine at position 37 (t(6)A37) in tRNAs that read codons beginning with adenine. Is involved in the transfer of the threonylcarbamoyl moiety of threonylcarbamoyl-AMP (TC-AMP) to the N6 group of A37, together with TsaE and TsaB. TsaD likely plays a direct catalytic role in this reaction. The polypeptide is tRNA N6-adenosine threonylcarbamoyltransferase (Frankia casuarinae (strain DSM 45818 / CECT 9043 / HFP020203 / CcI3)).